The following is a 312-amino-acid chain: UDP-N-acetylenolpyruvoylglucosamine reductase (312 aa).

Positions 30–202 (RVGGPAQWLA…VAAQFQLEPG (173 aa)) constitute an FAD-binding PCMH-type domain. The active site involves arginine 181. Residue serine 232 is the Proton donor of the active site. Glutamate 302 is a catalytic residue.

Belongs to the MurB family. FAD serves as cofactor.

The protein resides in the cytoplasm. The enzyme catalyses UDP-N-acetyl-alpha-D-muramate + NADP(+) = UDP-N-acetyl-3-O-(1-carboxyvinyl)-alpha-D-glucosamine + NADPH + H(+). Its pathway is cell wall biogenesis; peptidoglycan biosynthesis. Functionally, cell wall formation. This chain is UDP-N-acetylenolpyruvoylglucosamine reductase, found in Synechococcus sp. (strain CC9311).